Here is a 640-residue protein sequence, read N- to C-terminus: Choline O-acetyltransferase (640 aa).

Ser17 is subject to Phosphoserine. The Proton acceptor role is filled by His334. A Phosphoserine modification is found at Ser365. CoA contacts are provided by residues 412-424 (GKTFIKKQKYSPD), Ser450, and Gln551. The segment at 614–640 (CSSRQPADSKPPAPKEKARGPSQAKQS) is disordered.

The protein belongs to the carnitine/choline acetyltransferase family. As to quaternary structure, monomer.

It carries out the reaction choline + acetyl-CoA = acetylcholine + CoA. Functionally, catalyzes the reversible synthesis of acetylcholine (ACh) from acetyl CoA and choline at cholinergic synapses. This chain is Choline O-acetyltransferase (Chat), found in Rattus norvegicus (Rat).